We begin with the raw amino-acid sequence, 342 residues long: Cytoplasmic tRNA 2-thiolation protein 1 (342 aa).

The protein belongs to the TtcA family. CTU1/NCS6/ATPBD3 subfamily.

Its subcellular location is the cytoplasm. The protein operates within tRNA modification; 5-methoxycarbonylmethyl-2-thiouridine-tRNA biosynthesis. Its function is as follows. Plays a central role in 2-thiolation of mcm(5)S(2)U at tRNA wobble positions of tRNA(Lys), tRNA(Glu) and tRNA(Gln). Directly binds tRNAs and probably acts by catalyzing adenylation of tRNAs, an intermediate required for 2-thiolation. It is unclear whether it acts as a sulfurtransferase that transfers sulfur from thiocarboxylated URM1 onto the uridine of tRNAs at wobble position. This chain is Cytoplasmic tRNA 2-thiolation protein 1, found in Anopheles gambiae (African malaria mosquito).